A 359-amino-acid chain; its full sequence is MKPSMRAKLDHLDTRLAELNSLLTSEEATKDMDAYRKLTREHSDIATVVEQFYLYKQAEADAQAAEEMRKDPEMKEFADEEQKQALATMEALESTLQKLLLPKDENDERNVFLEIRAGTGGDEGALFAGDLLRMYTRFAERQGWKVEVVSAAESDLGGYKEVVLRLVGQAVYSRLKFESGGHRVQRVPQTETQGRIHTSACTVAVMPETDELEAVKINPAELRIDTFRASGAGGQHINKTDSAIRITHLPTGTVVECQDDRSQHRNREQAMKVLVSRIMDAREREKHQLEAQTRKSLVGTGDRSDRIRTYNFPQGRITDHRINLTLYKIDAMMDGDIDDLCNALASEHQAELLAALGDN.

The residue at position 235 (glutamine 235) is an N5-methylglutamine.

It belongs to the prokaryotic/mitochondrial release factor family. Methylated by PrmC. Methylation increases the termination efficiency of RF1.

Its subcellular location is the cytoplasm. Peptide chain release factor 1 directs the termination of translation in response to the peptide chain termination codons UAG and UAA. The polypeptide is Peptide chain release factor 1 (Polynucleobacter necessarius subsp. necessarius (strain STIR1)).